Here is a 263-residue protein sequence, read N- to C-terminus: uncharacterized protein (263 aa).

Position 31–38 (31–38 (GPTGSGKT)) interacts with ATP.

Belongs to the CbbQ/NirQ/NorQ/GpvN family.

This is an uncharacterized protein from Staphylococcus aureus (strain USA300).